The chain runs to 1086 residues: WD repeat-containing protein 64 (1086 aa).

WD repeat units lie at residues 129–168 (RRRD…WITG), 170–199 (DYLG…SSQE), 321–360 (AMPR…KPVG), 364–403 (GHMF…VLQV), 411–448 (PGDM…QDTK), 453–492 (THER…QIYQ), 498–537 (GLSI…EMKM), 560–602 (QVKQ…PYLQ), and 642–683 (IVDV…VKEI). The disordered stretch occupies residues 724-749 (ICSSTQCDSSKGPQSSKGSKQSIHDA). Positions 732–744 (SSKGPQSSKGSKQ) are enriched in low complexity. WD repeat units follow at residues 765–806 (ASRK…KDML), 809–850 (TKHS…DPPH), and 863–902 (AHSL…YCGY). The segment at 1047–1069 (DKVKREEAPEMTEGSRRKSLKRN) is disordered. The span at 1049–1062 (VKREEAPEMTEGSR) shows a compositional bias: basic and acidic residues.

The protein is WD repeat-containing protein 64 (Wdr64) of Mus musculus (Mouse).